The primary structure comprises 222 residues: UPF0758 protein Cpar_0627 (222 aa).

An MPN domain is found at 100–222; the sequence is KIQGAQDVFE…WFSFRDHSLL (123 aa). His-171, His-173, and Asp-184 together coordinate Zn(2+). The JAMM motif signature appears at 171–184; it reads HNHPSGDVQPSNAD.

Belongs to the UPF0758 family.

This is UPF0758 protein Cpar_0627 from Chlorobaculum parvum (strain DSM 263 / NCIMB 8327) (Chlorobium vibrioforme subsp. thiosulfatophilum).